Here is a 142-residue protein sequence, read N- to C-terminus: Conidial pigment biosynthesis dehydratase EthD (142 aa).

Residues P25–S121 form the EthD domain.

This sequence belongs to the tpcK family.

Its pathway is pigment biosynthesis. In terms of biological role, dehydratase; part of the Pks1 gene cluster that mediates the biosynthesis of an anthraquinone derivative pigment that contributes to conidial pigmentation that provides protection from UV radiation, heat and cold stress. The polyketide synthase Pks1 produces 1-acetyl-2,4,6,8-tetrahydroxy-9,10-anthraquinone though condensation of acetyl-CoA with malonyl-CoA. The dehydratase EthD and the laccase Mlac1 further convert the anthraquinone derivative into the final conidial pigment. The polypeptide is Conidial pigment biosynthesis dehydratase EthD (Metarhizium robertsii (strain ARSEF 23 / ATCC MYA-3075) (Metarhizium anisopliae (strain ARSEF 23))).